The following is a 464-amino-acid chain: E3 ubiquitin-protein ligase parkin (464 aa).

The 76-residue stretch at 1–76 (MIVFVRFNSS…VHIVQRPRRR (76 aa)) folds into the Ubiquitin-like domain. Residue Ser65 is modified to Phosphoserine; by PINK1. The interval 70–96 (VQRPRRRSHETNASGGDEPQSTSEGSI) is disordered. The segment at 77–236 (SHETNASGGD…LITSNRRSIP (160 aa)) is necessary for PINK1-dependent localization to mitochondria. The residue at position 80 (Thr80) is a Phosphothreonine. The span at 80 to 96 (TNASGGDEPQSTSEGSI) shows a compositional bias: polar residues. The RING-type 0; atypical zinc finger occupies 140-224 (PTYNSFFIYC…PTSDKDTSVA (85 aa)). A Phosphothreonine; by PINK1 modification is found at Thr174. The segment at 203-237 (TRAEFFFKCGAHPTSDKDTSVALNLITSNRRSIPC) is SYT11 binding 1. Thr216 is modified (phosphothreonine). The tract at residues 233–464 (RSIPCIACTD…ACMGDHWFDV (232 aa)) is TRIAD supradomain. Zn(2+)-binding residues include Cys237, Cys240, Cys252, His256, Cys259, Cys262, Cys288, Cys292, Cys331, and Cys336. Residues 237 to 292 (CIACTDVRSPVLVFQCNHRHVICLDCFHLYCVTRLNDRQFVHDAQLGYSLPCVAGC) form an RING-type 1 zinc finger. Residues 256–292 (HVICLDCFHLYCVTRLNDRQFVHDAQLGYSLPCVAGC) form an SYT11 binding 2 region. An IBR-type zinc finger spans residues 312 to 376 (TRYQQYGAEE…CKEAYHEGDC (65 aa)). Lys348 participates in a covalent cross-link: Glycyl lysine isopeptide (Lys-Gly) (interchain with G-Cter in ISG15). Zn(2+)-binding residues include Cys351, Cys359, Cys364, and Cys367. Lys368 is covalently cross-linked (Glycyl lysine isopeptide (Lys-Gly) (interchain with G-Cter in ISG15)). The Zn(2+) site is built by His372 and Cys376. The interval 377-409 (DSLLEPSGATSQAYRVDKRAAEQARWEEASKET) is REP. Residues Cys417 and Cys420 each coordinate Zn(2+). The RING-type 2; atypical zinc finger occupies 417–448 (CPRCNVPIEKNGGCMHMKCPQPQCKLEWCWNC). Cys430 is an active-site residue. The Zn(2+) site is built by Cys435, Cys440, Cys445, Cys448, Cys456, and His460.

It belongs to the RBR family. Parkin subfamily. Forms an E3 ubiquitin ligase complex with UBE2L3 or UBE2L6. Mediates 'Lys-63'-linked polyubiquitination by associating with UBE2V1. Part of a SCF-like complex, consisting of PRKN, CUL1 and FBXW7. Interacts with SNCAIP. Binds to the C2A and C2B domains of SYT11. Interacts and regulates the turnover of SEPTIN5. Part of a complex, including STUB1, HSP70 and GPR37. The amount of STUB1 in the complex increases during ER stress. STUB1 promotes the dissociation of HSP70 from PRKN and GPR37, thus facilitating PRKN-mediated GPR37 ubiquitination. HSP70 transiently associates with unfolded GPR37 and inhibits the E3 activity of PRKN, whereas, STUB1 enhances the E3 activity of PRKN through promotion of dissociation of HSP70 from PRKN-GPR37 complexes. Interacts with PSMD4 and PACRG. Interacts with LRRK2. Interacts with RANBP2. Interacts with SUMO1 but not SUMO2, which promotes nuclear localization and autoubiquitination. Interacts (via first RING-type domain) with AIMP2 (via N-terminus). Interacts with PSMA7 and RNF41. Interacts with PINK1. Forms a complex with PINK1 and PARK7. Interacts with CHPF, the interaction with isoform 2 may facilitate PRKN transport into the mitochondria. Interacts with MFN2 (phosphorylated), promotes PRKN localization in dysfunctional depolarized mitochondria. Interacts with FBXO7; this promotes translocation to dysfunctional depolarized mitochondria. Interacts with ZNF746. Interacts with heat shock protein 70 family members, including HSPA1L, HSPA1A and HSPA8; interaction HSPA1L promotes translocation to damaged mitochondria. Interacts with BAG4 and, to a lesser extent, BAG5; interaction with BAG4 inhibits translocation to damaged mitochondria. Forms a complex with PRKN and PARK7. Interacts with AMBRA1. In terms of processing, auto-ubiquitinates in an E2-dependent manner leading to its own degradation. Also polyubiquitinated by RNF41 for proteasomal degradation. Post-translationally, S-nitrosylated. Phosphorylated. Activation requires phosphorylation at Ser-65 by PINK1 and binding to PINK1 phosphorylated ubiquitin. Phosphorylation at Thr-174 by PINK1 and at Thr-216 is important for mitochondrial localization. Expressed in all subdivisions of the brain (at protein level). Highly expressed in brainstem, cranial nerve, pontine, cerebellar nuclei, indusium griseum, nuclei reticularis, strata oriens and laccunosum moleculare of the hippocampal CA2 region. Low levels were found in the telencephalon and diencephalon. Expressed in heart, liver, skeletal muscle, kidney and testis.

It is found in the cytoplasm. The protein resides in the cytosol. It localises to the nucleus. Its subcellular location is the endoplasmic reticulum. The protein localises to the mitochondrion. It is found in the mitochondrion outer membrane. The protein resides in the cell projection. It localises to the neuron projection. Its subcellular location is the postsynaptic density. The protein localises to the presynapse. It carries out the reaction [E2 ubiquitin-conjugating enzyme]-S-ubiquitinyl-L-cysteine + [acceptor protein]-L-lysine = [E2 ubiquitin-conjugating enzyme]-L-cysteine + [acceptor protein]-N(6)-ubiquitinyl-L-lysine.. It functions in the pathway protein modification; protein ubiquitination. In the autoinhibited state the side chain of Phe-462 inserts into a hydrophobic groove in RING-0, occluding the ubiquitin acceptor site Cys-430, whereas the REP repressor element binds RING-1 and blocks its E2-binding site. Activation of PRKN requires 2 steps: (1) phosphorylation at Ser-65 by PINK1 and (2) binding to phosphorylated ubiquitin, leading to unlock repression of the catalytic Cys-430 by the RING-0 region via an allosteric mechanism and converting PRKN to its fully-active form. According to another report, phosphorylation at Ser-65 by PINK1 is not essential for activation and only binding to phosphorylated ubiquitin is essential to unlock repression. In addition, ISG15 conjugation positively regulates its ubiquitin E3 ligase activity by suppressing the intramolecular interaction that maintains its autoinhibited conformation. Its function is as follows. Functions within a multiprotein E3 ubiquitin ligase complex, catalyzing the covalent attachment of ubiquitin moieties onto substrate proteins. Substrates include SYT11 and VDAC1. Other substrates are BCL2, CCNE1, GPR37, RHOT1/MIRO1, MFN1, MFN2, STUB1, SNCAIP, SEPTIN5, TOMM20, USP30, ZNF746, MIRO1 and AIMP2. Mediates monoubiquitination as well as 'Lys-6', 'Lys-11', 'Lys-48'-linked and 'Lys-63'-linked polyubiquitination of substrates depending on the context. Participates in the removal and/or detoxification of abnormally folded or damaged protein by mediating 'Lys-63'-linked polyubiquitination of misfolded proteins such as PARK7: 'Lys-63'-linked polyubiquitinated misfolded proteins are then recognized by HDAC6, leading to their recruitment to aggresomes, followed by degradation. Mediates 'Lys-63'-linked polyubiquitination of a 22 kDa O-linked glycosylated isoform of SNCAIP, possibly playing a role in Lewy-body formation. Mediates monoubiquitination of BCL2, thereby acting as a positive regulator of autophagy. Protects against mitochondrial dysfunction during cellular stress, by acting downstream of PINK1 to coordinate mitochondrial quality control mechanisms that remove and replace dysfunctional mitochondrial components. Depending on the severity of mitochondrial damage and/or dysfunction, activity ranges from preventing apoptosis and stimulating mitochondrial biogenesis to regulating mitochondrial dynamics and eliminating severely damaged mitochondria via mitophagy. Activation and recruitment onto the outer membrane of damaged/dysfunctional mitochondria (OMM) requires PINK1-mediated phosphorylation of both PRKN and ubiquitin. After mitochondrial damage, functions with PINK1 to mediate the decision between mitophagy or preventing apoptosis by inducing either the poly- or monoubiquitination of VDAC1, respectively; polyubiquitination of VDAC1 promotes mitophagy, while monoubiquitination of VDAC1 decreases mitochondrial calcium influx which ultimately inhibits apoptosis. When cellular stress results in irreversible mitochondrial damage, promotes the autophagic degradation of dysfunctional depolarized mitochondria (mitophagy) by promoting the ubiquitination of mitochondrial proteins such as TOMM20, RHOT1/MIRO1, MFN1 and USP30. Preferentially assembles 'Lys-6'-, 'Lys-11'- and 'Lys-63'-linked polyubiquitin chains, leading to mitophagy. The PINK1-PRKN pathway also promotes fission of damaged mitochondria by PINK1-mediated phosphorylation which promotes the PRKN-dependent degradation of mitochondrial proteins involved in fission such as MFN2. This prevents the refusion of unhealthy mitochondria with the mitochondrial network or initiates mitochondrial fragmentation facilitating their later engulfment by autophagosomes. Regulates motility of damaged mitochondria via the ubiquitination and subsequent degradation of MIRO1 and MIRO2; in motor neurons, this likely inhibits mitochondrial intracellular anterograde transport along the axons which probably increases the chance of the mitochondria undergoing mitophagy in the soma. Involved in mitochondrial biogenesis via the 'Lys-48'-linked polyubiquitination of transcriptional repressor ZNF746/PARIS which leads to its subsequent proteasomal degradation and allows activation of the transcription factor PPARGC1A. Limits the production of reactive oxygen species (ROS). Regulates cyclin-E during neuronal apoptosis. In collaboration with CHPF isoform 2, may enhance cell viability and protect cells from oxidative stress. Independently of its ubiquitin ligase activity, protects from apoptosis by the transcriptional repression of p53/TP53. May protect neurons against alpha synuclein toxicity, proteasomal dysfunction, GPR37 accumulation, and kainate-induced excitotoxicity. May play a role in controlling neurotransmitter trafficking at the presynaptic terminal and in calcium-dependent exocytosis. May represent a tumor suppressor gene. This chain is E3 ubiquitin-protein ligase parkin, found in Mus musculus (Mouse).